We begin with the raw amino-acid sequence, 326 residues long: tRNA-modifying protein YgfZ (326 aa).

Residues tryptophan 27 and tryptophan 189 each contribute to the folate site.

It belongs to the tRNA-modifying YgfZ family.

The protein localises to the cytoplasm. Folate-binding protein involved in regulating the level of ATP-DnaA and in the modification of some tRNAs. It is probably a key factor in regulatory networks that act via tRNA modification, such as initiation of chromosomal replication. The protein is tRNA-modifying protein YgfZ of Salmonella schwarzengrund (strain CVM19633).